Reading from the N-terminus, the 73-residue chain is Disintegrin trigramin-beta-2 (73 aa).

One can recognise a Disintegrin domain in the interval 1-73 (EAGKDCDCGS…AGCPRNPFHA (73 aa)). Disulfide bonds link Cys-6-Cys-21, Cys-8-Cys-16, Cys-15-Cys-38, Cys-29-Cys-35, Cys-34-Cys-59, and Cys-47-Cys-66. Positions 51–53 (RGD) match the Cell attachment site motif.

The protein belongs to the venom metalloproteinase (M12B) family. P-II subfamily. P-IIa sub-subfamily. As to quaternary structure, monomer (disintegrin). As to expression, expressed by the venom gland.

It is found in the secreted. In terms of biological role, inhibits fibrinogen interaction with platelets. Acts by binding to the alpha-IIb/beta-3 receptor (ITGA2B/ITGB3) on the platelet surface and inhibits aggregation induced by ADP, thrombin, platelet-activating factor and collagen. The chain is Disintegrin trigramin-beta-2 from Craspedocephalus gramineus (Bamboo pit viper).